The chain runs to 2352 residues: Cell wall alpha-1,3-glucan synthase mok12 (2352 aa).

Residues 1786–1813 (SNDFGIREVPLSDANQSSQADSTSIDRY) are disordered. Residues 1798-1813 (DANQSSQADSTSIDRY) are compositionally biased toward polar residues.

The protein belongs to the glycosyltransferase group 1 family.

It catalyses the reaction [(1-&gt;3)-alpha-D-glucosyl](n) + UDP-alpha-D-glucose = [(1-&gt;3)-alpha-D-glucosyl](n+1) + UDP + H(+). This is Cell wall alpha-1,3-glucan synthase mok12 (mok12) from Schizosaccharomyces pombe (strain 972 / ATCC 24843) (Fission yeast).